Reading from the N-terminus, the 94-residue chain is Enhancer of yellow 2 transcription factor (94 aa).

This sequence belongs to the ENY2 family. In terms of assembly, component of the nuclear pore complex (NPC)-associated AMEX complex (anchoring and mRNA export complex), composed of at least e(y)2 and xmas-2. Component of the SAGA transcription coactivator-HAT complexes, at least composed of Ada2b, e(y)2, Pcaf/Gcn5, Taf10 and Nipped-A/Trrap. Within the SAGA complex, e(y)2, Sgf11, and not/nonstop form an additional subcomplex of SAGA called the DUB module (deubiquitination module). Component of the THO complex, composed of at least e(y)2, HPR1, THO2, THOC5, THOC6 and THOC7. Interacts with e(y)1. Interacts with su(Hw) (via zinc fingers). Interacts with xmas-2; required for localization to the nuclear periphery. Interacts with the nuclear pore complex (NPC).

It is found in the nucleus. The protein resides in the nucleoplasm. The protein localises to the cytoplasm. Involved in mRNA export coupled transcription activation by association with both the AMEX and the SAGA complexes. The SAGA complex is a multiprotein complex that activates transcription by remodeling chromatin and mediating histone acetylation and deubiquitination. Within the SAGA complex, participates in a subcomplex that specifically deubiquitinates histone H2B. The SAGA complex is recruited to specific gene promoters by activators, where it is required for transcription. Required for nuclear receptor-mediated transactivation. Involved in transcription elongation by recruiting the THO complex onto nascent mRNA. The AMEX complex functions in docking export-competent ribonucleoprotein particles (mRNPs) to the nuclear entrance of the nuclear pore complex (nuclear basket). AMEX participates in mRNA export and accurate chromatin positioning in the nucleus by tethering genes to the nuclear periphery. The sequence is that of Enhancer of yellow 2 transcription factor from Drosophila mojavensis (Fruit fly).